The following is a 359-amino-acid chain: Threonine dehydratase biosynthetic, chloroplastic (359 aa).

ACT-like domains are found at residues 184–256 (ALLA…NFSH) and 278–349 (IFGE…LDNS).

The protein belongs to the serine/threonine dehydratase family. As to quaternary structure, homotetramer. The cofactor is pyridoxal 5'-phosphate. As to expression, floral buds of untreated plants. After ABA treatment or mechanical wounding is mostly accumulated in leaves, to a lesser extent in stems, but not in roots. Expressed in anthers, carpel leaves, pith cells, sepals and petals. Not expressed in stomium, vascular bundles, epidermal cells or pollen mother cells.

The protein localises to the plastid. The protein resides in the chloroplast. The enzyme catalyses L-threonine = 2-oxobutanoate + NH4(+). It participates in amino-acid biosynthesis; L-isoleucine biosynthesis; 2-oxobutanoate from L-threonine: step 1/1. The sequence is that of Threonine dehydratase biosynthetic, chloroplastic from Solanum tuberosum (Potato).